A 308-amino-acid polypeptide reads, in one-letter code: tRNA pseudouridine synthase B (308 aa).

The Nucleophile role is filled by Asp47.

This sequence belongs to the pseudouridine synthase TruB family. Type 1 subfamily.

It carries out the reaction uridine(55) in tRNA = pseudouridine(55) in tRNA. Responsible for synthesis of pseudouridine from uracil-55 in the psi GC loop of transfer RNAs. This Xanthomonas oryzae pv. oryzae (strain MAFF 311018) protein is tRNA pseudouridine synthase B.